A 270-amino-acid polypeptide reads, in one-letter code: Type III pantothenate kinase (270 aa).

6–13 lines the ATP pocket; it reads DVRNTHTV. 109–112 provides a ligand contact to substrate; sequence GADR. Residue aspartate 111 is the Proton acceptor of the active site. Aspartate 131 contributes to the K(+) binding site. Residue serine 134 participates in ATP binding. Threonine 186 lines the substrate pocket.

Belongs to the type III pantothenate kinase family. In terms of assembly, homodimer. Requires NH4(+) as cofactor. It depends on K(+) as a cofactor.

Its subcellular location is the cytoplasm. The catalysed reaction is (R)-pantothenate + ATP = (R)-4'-phosphopantothenate + ADP + H(+). It functions in the pathway cofactor biosynthesis; coenzyme A biosynthesis; CoA from (R)-pantothenate: step 1/5. Catalyzes the phosphorylation of pantothenate (Pan), the first step in CoA biosynthesis. In Mycolicibacterium gilvum (strain PYR-GCK) (Mycobacterium gilvum (strain PYR-GCK)), this protein is Type III pantothenate kinase.